We begin with the raw amino-acid sequence, 548 residues long: MALHVPKAPGFAQMLKEGAKHFSGLEEAVYRNIQACKELAQTTRTAYGPNGMNKMVINHLEKLFVTNDAATILRELEVQHPAAKMIVMASHMQEQEVGDGTNFVLVFAGALLELAEELLRIGLSVSEVIEGYEIACRKAHEILPNLVCCSAKNLRDIDEVSSLLRTSIMSKQYGNEVFLAKLIAQACVSIFPDSGHFNVDNIRVCKILGSGISSSSVLHGMVFKKETEGDVTSVKDAKIAVYSCPFDGMITETKGTVLIKTAEELMNFSKGEENLMDAQVKAIADTGANVVVTGGKVADMALHYANKYNIMLVRLNSKWDLRRLCKTVGATALPRLTPPVLEEMGHCDSVYLSEVGDTQVVVFKHEKEDGAISTIVLRGSTDNLMDDIERAVDDGVNTFKVLTRDKRLVPGGGATEIELAKQITSYGETCPGLEQYAIKKFAEAFEAIPRALAENSGVKANEVISKLYAVHQEGNKNVGLDIEAEVPAVKDMLEAGILDTYLGKYWAIKLATNAAVTVLRVDQIIMAKPAGGPKPPSGKKDWDDDQND.

Position 2 is an N-acetylalanine (Ala2). Ser23 carries the post-translational modification Phosphoserine. Tyr30 carries the phosphotyrosine modification. Residues Tyr47 and Gly48 each coordinate ADP. Asp99 serves as a coordination point for Mg(2+). Gly100, Thr101, Asn102, and Phe103 together coordinate ADP. ATP contacts are provided by Gly100, Thr101, and Asn102. The residue at position 162 (Ser162) is a Phosphoserine. Residues Met169, Ser170, and Lys171 each contribute to the ADP site. Ser170 and Lys171 together coordinate ATP. Position 213 is a phosphoserine (Ser213). Glycyl lysine isopeptide (Lys-Gly) (interchain with G-Cter in SUMO2) cross-links involve residues Lys224, Lys254, and Lys260. 2 positions are modified to phosphoserine: Ser269 and Ser317. N6-acetyllysine is present on residues Lys318 and Lys400. Gly412 lines the ADP pocket. Gly412 serves as a coordination point for ATP. Lys459 participates in a covalent cross-link: Glycyl lysine isopeptide (Lys-Gly) (interchain with G-Cter in SUMO1). The residue at position 466 (Lys466) is an N6-acetyllysine. Asp499 provides a ligand contact to ADP. 2 residues coordinate ATP: Asp499 and Lys504. The residue at position 505 (Tyr505) is a Phosphotyrosine. The tract at residues 529 to 548 (PAGGPKPPSGKKDWDDDQND) is disordered. Lys534 participates in a covalent cross-link: Glycyl lysine isopeptide (Lys-Gly) (interchain with G-Cter in SUMO2). Residue Ser537 is modified to Phosphoserine. Lys539 is covalently cross-linked (Glycyl lysine isopeptide (Lys-Gly) (interchain with G-Cter in SUMO2)).

This sequence belongs to the TCP-1 chaperonin family. As to quaternary structure, component of the chaperonin-containing T-complex (TRiC), a hexadecamer composed of two identical back-to-back stacked rings enclosing a protein folding chamber. Each ring is made up of eight different subunits: TCP1/CCT1, CCT2, CCT3, CCT4, CCT5, CCT6A/CCT6, CCT7, CCT8. Interacts with PACRG. Interacts with DNAAF4. Interacts with synaptic plasticity regulator PANTS.

It localises to the cytoplasm. Its subcellular location is the cytoskeleton. It is found in the microtubule organizing center. The protein resides in the centrosome. The protein localises to the cilium basal body. The catalysed reaction is ATP + H2O = ADP + phosphate + H(+). In terms of biological role, component of the chaperonin-containing T-complex (TRiC), a molecular chaperone complex that assists the folding of actin, tubulin and other proteins upon ATP hydrolysis. The TRiC complex mediates the folding of WRAP53/TCAB1, thereby regulating telomere maintenance. As part of the TRiC complex may play a role in the assembly of BBSome, a complex involved in ciliogenesis regulating transports vesicles to the cilia. The polypeptide is T-complex protein 1 subunit theta (CCT8) (Homo sapiens (Human)).